The following is a 283-amino-acid chain: MTKLITTVKEMQHIVKAAKRSGTTIGFIPTMGALHDGHLTMVRESVSTNDITIVSVFVNPLQFGPNEDFDAYPRQIDKDLELVSEVGADIVFHPAVEDMYPGELGIDVKVGPLADVLEGAKRPGHFDGVVTVVNKLFNIVMPDYAYFGKKDAQQLAIVEQMVKDFNHAVEIIGIDIVREADGLAKSSRNVYLTEQERQEAVHLSKSLLLAQALYQDGERQSKVIIDRVTEYLESHISGRIEEVAVYSYPQLVEQHEITGRIFISLAVKFSKARLIDNIIIGAE.

ATP is bound at residue 31-38; the sequence is MGALHDGH. The active-site Proton donor is histidine 38. Residue glutamine 62 participates in (R)-pantoate binding. Residue glutamine 62 participates in beta-alanine binding. An ATP-binding site is contributed by 148–151; it reads GKKD. A (R)-pantoate-binding site is contributed by glutamine 154. Residues valine 177 and 185-188 contribute to the ATP site; that span reads KSSR.

This sequence belongs to the pantothenate synthetase family. In terms of assembly, homodimer.

It is found in the cytoplasm. It catalyses the reaction (R)-pantoate + beta-alanine + ATP = (R)-pantothenate + AMP + diphosphate + H(+). Its pathway is cofactor biosynthesis; (R)-pantothenate biosynthesis; (R)-pantothenate from (R)-pantoate and beta-alanine: step 1/1. Catalyzes the condensation of pantoate with beta-alanine in an ATP-dependent reaction via a pantoyl-adenylate intermediate. This is Pantothenate synthetase from Staphylococcus aureus (strain USA300).